We begin with the raw amino-acid sequence, 112 residues long: Large ribosomal subunit protein bL17 (112 aa).

The protein belongs to the bacterial ribosomal protein bL17 family. Part of the 50S ribosomal subunit. Contacts protein L32.

The sequence is that of Large ribosomal subunit protein bL17 from Moorella thermoacetica (strain ATCC 39073 / JCM 9320).